The primary structure comprises 805 residues: Probable inorganic carbon transporter subunit DabA (805 aa).

Zn(2+) contacts are provided by cysteine 334, aspartate 336, histidine 491, and cysteine 506.

Belongs to the inorganic carbon transporter (TC 9.A.2) DabA family. As to quaternary structure, forms a complex with DabB. It depends on Zn(2+) as a cofactor.

The protein resides in the cell inner membrane. Functionally, part of an energy-coupled inorganic carbon pump. The polypeptide is Probable inorganic carbon transporter subunit DabA (Ruegeria sp. (strain TM1040) (Silicibacter sp.)).